The sequence spans 1857 residues: Ankyrin repeat domain-containing protein 31 (1857 aa).

Disordered regions lie at residues 1 to 30 and 195 to 215; these read MENGAEASDCDSDETVIEGSVTENEPEDEE and SEPGEEVTQTMTSKETKDEES. Over residues 195–207 the composition is skewed to polar residues; it reads SEPGEEVTQTMTS. ANK repeat units follow at residues 475–504, 508–537, and 541–570; these read FGENLLYKAALHNDVDLVRCCIKNGENVNQ, DGWTALHEASIGGYYQAVSELLKGGADVNV, and YQITPLHDAVMNRHYKVAELLLMSGADPLF. Residues 676–691 are compositionally biased toward polar residues; that stretch reads KFGKSNLNSVKNSRTN. Disordered regions lie at residues 676–711, 813–844, 995–1038, 1046–1065, and 1075–1137; these read KFGKSNLNSVKNSRTNVSKRKGQKNRQQKKTQVDDR, VTTHQQPHTNQEQYSSPYKSLGNNSSNEKGKA, RDSS…TVVH, KAEKRREDLPGNEPINNTDF, and ANSS…QNFR. Residues 692–704 are compositionally biased toward basic residues; sequence VSKRKGQKNRQQK. Positions 814–839 are enriched in polar residues; that stretch reads TTHQQPHTNQEQYSSPYKSLGNNSSN. Residues 1008–1019 are compositionally biased toward basic and acidic residues; the sequence is SLERKQDTDKNY. Polar residues predominate over residues 1023–1032; the sequence is GPNTSSSSRP. Basic and acidic residues predominate over residues 1082–1136; it reads QRKEKENVRKSDAELTHNDSEAERTLKSCEEKKKNMDSETHSPCDIQEHRKDQNF. ANK repeat units lie at residues 1162–1191, 1195–1224, and 1228–1257; these read KGESQLHVAARGGNLSRVKVLIEARADVNL, AGWTPLHKAASGGFDDVIIELLQAGANVNC, and DGIVPLHGASAGNHLKAAEILLEHGANPNQ. Disordered regions lie at residues 1457–1479, 1540–1570, 1609–1640, and 1663–1697; these read NSDISSDKKSQEPPTMGDSAHAQ, GGLLRSKPTDDAEKIASSSQPAALTPHAENS, DPHSQKLSRCNPKRRNKKTASQQPSAGAAEPL, and AAAASHTDSTQSSLSSASAHQHPTKTVPHRNTTPR. The segment covering 1555-1570 has biased composition (polar residues); sequence ASSSQPAALTPHAENS. Residues 1663-1683 show a composition bias toward low complexity; that stretch reads AAAASHTDSTQSSLSSASAHQ. An RAMA domain is found at 1687-1782; the sequence is KTVPHRNTTP…TYLGRELVKC (96 aa).

As to quaternary structure, interacts with REC114; the interaction is direct. Interacts with IHO1. In terms of tissue distribution, present in meiotic cells (at protein level).

It localises to the nucleus. The protein localises to the chromosome. Required for DNA double-strand breaks (DSBs) formation during meiotic recombination. Regulates the spatial and temporal patterns of pre-DSB recombinosome assembly and recombination activity by acting as a scaffold that anchors REC114 and other factors to specific genomic locations, thereby regulating DSB formation. Plays a key role in recombination in the pseudoautosomal regions of sex chromosomes. This Mus musculus (Mouse) protein is Ankyrin repeat domain-containing protein 31.